The sequence spans 810 residues: Coiled-coil domain-containing protein 15 (810 aa).

Coiled-coil stretches lie at residues 65–89, 160–189, and 638–669; these read VVEEEIKEQQRRKQESLRHFQRQVR, DGENQLFQQQAQALSQTMKQARHQLASFKT, and MDIEREQVKEQNRQRERKRRIEKIKKKKEQQR.

In terms of assembly, interacts with POC5, POC1B, CETN2 and FAM161A.

It localises to the cytoplasm. Its subcellular location is the cytoskeleton. It is found in the microtubule organizing center. The protein resides in the centrosome. The protein localises to the centriole. It localises to the centriolar satellite. In terms of biological role, plays an important role in primary cilium assembly, maintenance, and length regulation. Interacts with centriole inner scaffold proteins to promote proper centriole size and integrity and assembly of functional cilia. Required for the recruitment of both the inner scaffold protein POC1B and the distal SFI1/CETN2 complex to centrioles. The chain is Coiled-coil domain-containing protein 15 (Ccdc15) from Mus musculus (Mouse).